Reading from the N-terminus, the 845-residue chain is Translation initiation factor IF-2 (845 aa).

Disordered regions lie at residues 44–91 (KRRK…NLSS) and 119–256 (ARRA…NQEP). Basic and acidic residues predominate over residues 119-129 (ARRAKEREESL). The span at 139–148 (DETPQEEEEP) shows a compositional bias: acidic residues. Over residues 156–165 (SLSPAQSQIE) the composition is skewed to polar residues. 2 stretches are compositionally biased toward basic and acidic residues: residues 179–194 (IEKR…DRNS) and 202–217 (SEVR…DEKR). Residues 343–510 (LRPPVVTIMG…AILLQAEILD (168 aa)) enclose the tr-type G domain. Positions 352 to 359 (GHVDHGKT) are G1. Position 352-359 (352-359 (GHVDHGKT)) interacts with GTP. A G2 region spans residues 377 to 381 (GITQH). A G3 region spans residues 398-401 (DTPG). Residues 398-402 (DTPGH) and 452-455 (NKID) contribute to the GTP site. Residues 452 to 455 (NKID) are G4. Residues 488-490 (SAK) are G5.

The protein belongs to the TRAFAC class translation factor GTPase superfamily. Classic translation factor GTPase family. IF-2 subfamily.

The protein resides in the cytoplasm. In terms of biological role, one of the essential components for the initiation of protein synthesis. Protects formylmethionyl-tRNA from spontaneous hydrolysis and promotes its binding to the 30S ribosomal subunits. Also involved in the hydrolysis of GTP during the formation of the 70S ribosomal complex. The protein is Translation initiation factor IF-2 of Bartonella henselae (strain ATCC 49882 / DSM 28221 / CCUG 30454 / Houston 1) (Rochalimaea henselae).